The sequence spans 515 residues: Maturase K (515 aa).

Belongs to the intron maturase 2 family. MatK subfamily.

The protein localises to the plastid. It localises to the chloroplast. Functionally, usually encoded in the trnK tRNA gene intron. Probably assists in splicing its own and other chloroplast group II introns. This chain is Maturase K, found in Pinus cembra (Swiss stone pine).